The following is a 419-amino-acid chain: GTPase Obg (419 aa).

One can recognise an Obg domain in the interval 2–159 (SAFVDAVTVE…FLAKVELQVL (158 aa)). In terms of domain architecture, OBG-type G spans 160 to 325 (ADVGLLGYPN…LKYEIATTLK (166 aa)). GTP is bound by residues 166–173 (GYPNVGKS), 191–195 (FTTLS), 212–215 (DLPG), 279–282 (NKMD), and 306–308 (SAL). Mg(2+) is bound by residues serine 173 and threonine 193. Positions 341–419 (LNAEDAVDFI…IFSYEFEYLE (79 aa)) constitute an OCT domain.

It belongs to the TRAFAC class OBG-HflX-like GTPase superfamily. OBG GTPase family. As to quaternary structure, monomer. Mg(2+) serves as cofactor.

The protein resides in the cytoplasm. An essential GTPase which binds GTP, GDP and possibly (p)ppGpp with moderate affinity, with high nucleotide exchange rates and a fairly low GTP hydrolysis rate. Plays a role in control of the cell cycle, stress response, ribosome biogenesis and in those bacteria that undergo differentiation, in morphogenesis control. This is GTPase Obg from Acholeplasma laidlawii (strain PG-8A).